The primary structure comprises 101 residues: Parathymosin (101 aa).

Residues 1–101 (MSEKSVEAAA…RQKTENGASA (101 aa)) are disordered. Serine 2 carries the N-acetylserine modification. Serine 2 is modified (phosphoserine). Lysine 4 is subject to N6-acetyllysine. Phosphoserine is present on residues serine 5 and serine 13. The segment covering 13–37 (SAKDLKEKKDKVEEKAGRKERKKEV) has biased composition (basic and acidic residues). Lysine 15 bears the N6-acetyllysine mark. Over residues 38-74 (VEEEENGAEEEEEETAEDGEDDDEGDEEDEEEEEEDE) the composition is skewed to acidic residues. Position 52 is a phosphothreonine (threonine 52). At lysine 91 the chain carries N6-acetyllysine.

Belongs to the pro/parathymosin family.

Parathymosin may mediate immune function by blocking the effect of prothymosin alpha which confers resistance to certain opportunistic infections. This chain is Parathymosin (Ptms), found in Mus musculus (Mouse).